A 192-amino-acid chain; its full sequence is Virion infectivity factor (192 aa).

Residues 14 to 17 (DRMR) form an interaction with host APOBEC3F; F1-box region. An interaction with host APOBEC3G; G-box region spans residues 40–44 (YRHHY). The interval 54-72 (EVHIPLGEARLVVTTYWGL) is interaction with host APOBEC3F and APOBEC3G; FG-box. Residues 74-79 (TGEKEW) are interaction with host APOBEC3F; F2-box. The tract at residues 75–114 (GEKEWHLGQGVSIEWRKRRYSTQVDPGLADQLIHMYYFDC) is RNA-binding. Phosphothreonine; by host MAP4K1 is present on Thr96. The Zn(2+) site is built by His108, Cys114, Cys133, and His139. Residues 108-139 (HMYYFDCFAESAIRKAILGHIVSPSCEYQAGH) carry the HCCH motif motif. Ser144 bears the Phosphoserine; by host mark. The BC-box-like motif motif lies at 144 to 153 (SLQYLALAAL). Positions 151–164 (AALIAPKKIKPPLP) are multimerization. Residues 151–180 (AALIAPKKIKPPLPSVRKLTEDRWNKPQKT) form an SOCS box-like region. Ser165 carries the post-translational modification Phosphoserine; by host MAP4K1. Residues 165–192 (SVRKLTEDRWNKPQKTKGRRGSHTMNGH) form a disordered region. The membrane association stretch occupies residues 171 to 172 (ED). Residues 176–186 (KPQKTKGRRGS) show a composition bias toward basic residues. Phosphothreonine; by host is present on Thr188.

This sequence belongs to the primate lentivirus group Vif protein family. In terms of assembly, homomultimer; in vitro and presumably in vivo. Interacts with viral RNA and Pr55Gag precursor; these interactions mediate Vif incorporation into the virion. Interacts with the viral reverse transcriptase. Forms cullin-5-RING E3 ubiquitin-protein ligase complex (ECS complex) by interacting with host CUL5, RBX2, elongin BC complex (ELOB and ELOC) and CBFB/CBF-beta. Within the ECS complex, Vif interacts directly with host CUL5, ELOC and APOBEC (APOBEC3F and APOBEC3G) substrates. The ECS complex also contains some single-stranded RNA (ssRNA) that acts as a glue that bridges Vif with APOBEC (APOBEC3F and APOBEC3G) substrates. Interacts with host UBCE7IP1 isoform 3/ZIN and possibly with SAT. Interacts with host tyrosine kinases HCK and FYN; these interactions may decrease level of phosphorylated APOBEC3G incorporation into virions. Interacts with host ABCE1; this interaction may play a role in protecting viral RNA from damage during viral assembly. Interacts with host MDM2; this interaction targets Vif for degradation by the proteasome. Processed in virion by the viral protease. In terms of processing, highly phosphorylated on serine and threonine residues. Post-translationally, polyubiquitinated and degraded by the proteasome in the presence of APOBEC3G.

Its subcellular location is the host cytoplasm. The protein localises to the host cell membrane. It is found in the virion. Functionally, counteracts the innate antiviral activity of host APOBEC3F and APOBEC3G by promoting their ubiquitination and degradation. Acts as a substrate recognition component of an E3 ubiquitin-protein ligase complex: mechanistically, Vif hijacks a host cullin-5-RING E3 ubiquitin-protein ligase complex (ECS complex) and the transcription coactivator CBFB/CBF-beta to form an active E3 ubiquitin-protein ligase complex that targets APOBEC3G and APOBEC3F for polyubiquitination, leading to their degradation by the proteasome. Vif interaction with APOBEC3G also blocks its cytidine deaminase activity in a proteasome-independent manner, suggesting a dual inhibitory mechanism. May interact directly with APOBEC3G mRNA in order to inhibit its translation. Association with CBFB/CBF-beta also inhibits the transcription coactivator activity of CBFB/CBF-beta. Seems to play a role in viral morphology by affecting the stability of the viral nucleoprotein core. Finally, Vif also contributes to the G2 cell cycle arrest observed in HIV infected cells. This Human immunodeficiency virus type 1 group M subtype D (isolate NDK) (HIV-1) protein is Virion infectivity factor.